The chain runs to 882 residues: Valine--tRNA ligase (882 aa).

Residues 52–62 carry the 'HIGH' region motif; that stretch reads PNVTGSLHMGH. Positions 539-543 match the 'KMSKS' region motif; it reads KMSKS. Lys-542 provides a ligand contact to ATP. Positions 816–882 form a coiled coil; that stretch reads IDVAAERRRL…RINARLAVLQ (67 aa).

The protein belongs to the class-I aminoacyl-tRNA synthetase family. ValS type 1 subfamily. In terms of assembly, monomer.

The protein localises to the cytoplasm. The catalysed reaction is tRNA(Val) + L-valine + ATP = L-valyl-tRNA(Val) + AMP + diphosphate. Its function is as follows. Catalyzes the attachment of valine to tRNA(Val). As ValRS can inadvertently accommodate and process structurally similar amino acids such as threonine, to avoid such errors, it has a 'posttransfer' editing activity that hydrolyzes mischarged Thr-tRNA(Val) in a tRNA-dependent manner. The chain is Valine--tRNA ligase from Mycolicibacterium paratuberculosis (strain ATCC BAA-968 / K-10) (Mycobacterium paratuberculosis).